The sequence spans 353 residues: uncharacterized protein (353 aa).

The signal sequence occupies residues 1–30 (MHLRHLFSPRLRGSLLLGSLLVASSFSTLA).

This is an uncharacterized protein from Salmonella typhi.